Reading from the N-terminus, the 1781-residue chain is BCL-6 corepressor-like protein 1 (1781 aa).

2 disordered regions span residues Ala-64–Arg-136 and Ala-337–Ser-362. Composition is skewed to polar residues over residues Gly-66–Glu-82 and Pro-127–Arg-136. Phosphoserine is present on Ser-490. Over residues Ser-521–Ser-531 the composition is skewed to low complexity. Disordered stretches follow at residues Ser-521–Thr-545, Leu-561–Leu-616, Asn-733–Lys-777, Pro-869–Asp-895, and Gln-933–Met-960. Over residues Thr-581–Pro-594 the composition is skewed to polar residues. Phosphoserine is present on residues Ser-593 and Ser-607. Lys-741 is covalently cross-linked (Glycyl lysine isopeptide (Lys-Gly) (interchain with G-Cter in SUMO2)). Ser-1024 carries the post-translational modification Phosphoserine. Lys-1087 is covalently cross-linked (Glycyl lysine isopeptide (Lys-Gly) (interchain with G-Cter in SUMO2)). The disordered stretch occupies residues Trp-1100–Ala-1484. Over residues Cys-1116 to Arg-1127 the composition is skewed to basic and acidic residues. At Ser-1162 the chain carries Phosphoserine. Residues Val-1176 to Pro-1185 are compositionally biased toward basic residues. Basic and acidic residues predominate over residues Lys-1195–Phe-1213. The segment covering Ser-1222 to Ser-1234 has biased composition (polar residues). Composition is skewed to basic and acidic residues over residues Thr-1271–Asp-1284 and Arg-1297–Ala-1307. Positions Thr-1314–Glu-1324 are enriched in acidic residues. Positions Lys-1328–Lys-1339 are enriched in basic residues. Over residues Glu-1350–Ala-1362 the composition is skewed to basic and acidic residues. Polar residues-rich tracts occupy residues Leu-1381–Pro-1394 and Arg-1437–Pro-1449. 3 ANK repeats span residues Ala-1493–His-1523, Ala-1527–Cys-1556, and Asp-1560–Leu-1589. Residues Asp-1664–Ser-1781 form a PCGF Ub-like fold domain (PUFD); required for the interaction with the KDM2B-SKP1 heterodimeric complex region.

The protein belongs to the BCOR family. Interacts with PCGF1, forming heterodimers. The PCGF1-BCORL1 heterodimeric complex interacts with the KDM2B-SKP1 heterodimeric complex to form a homotetrameric polycomb repression complex 1 (PRC1.1). Interacts with SKP1. Interacts with CTBP1, HDAC4, HDAC5 and HDAC7. In terms of tissue distribution, highly expressed in lung and testis.

It localises to the nucleus. Transcriptional corepressor. May specifically inhibit gene expression when recruited to promoter regions by sequence specific DNA-binding proteins such as BCL6. This repression may be mediated at least in part by histone deacetylase activities which can associate with this corepressor. The chain is BCL-6 corepressor-like protein 1 (Bcorl1) from Mus musculus (Mouse).